A 326-amino-acid polypeptide reads, in one-letter code: Ras association domain-containing protein 2 (326 aa).

The interval 111–133 (EVDAPPEGDQMPSSTDSRGLKPL) is disordered. A Ras-associating domain is found at 176–264 (YNHKTSVFTP…SKVFLMEKDQ (89 aa)). Positions 272–319 (VAQYIKFEMPVLKSFIQKLQEEEDREVKKLMRKYTVLRLMIRQRLEEI) constitute an SARAH domain.

As to quaternary structure, interacts directly with activated KRAS in a GTP-dependent manner. Interacts (via SARAH domain) with STK3/MST2 and STK4/MST1. Post-translationally, phosphorylated by STK3/MST2 and STK4/MST1. As to expression, widely expressed with highest levels in brain, placenta, peripheral blood and lung. Frequently down-regulated in lung tumor cell lines.

The protein resides in the nucleus. The protein localises to the cytoplasm. It localises to the chromosome. It is found in the centromere. Its subcellular location is the kinetochore. In terms of biological role, potential tumor suppressor. Acts as a KRAS-specific effector protein. May promote apoptosis and cell cycle arrest. Stabilizes STK3/MST2 by protecting it from proteasomal degradation. This chain is Ras association domain-containing protein 2 (RASSF2), found in Homo sapiens (Human).